A 384-amino-acid chain; its full sequence is Glucans biosynthesis protein C (384 aa).

10 helical membrane passes run 17–37 (AWLM…THSW), 54–74 (FIHA…SYML), 91–111 (VGIP…ILLQ), 140–160 (LWFL…FTWF), 173–193 (AISL…YAAI), 212–232 (FIVM…LAFI), 240–260 (FTTP…AYLL), 274–294 (TESV…FSLG), 311–331 (ASLF…AYIT), and 338–358 (LIGF…LYEI).

Belongs to the acyltransferase 3 family. OpgC subfamily.

The protein resides in the cell membrane. It functions in the pathway glycan metabolism; osmoregulated periplasmic glucan (OPG) biosynthesis. Functionally, necessary for the succinyl substitution of periplasmic glucans. Could catalyze the transfer of succinyl residues from the cytoplasmic side of the membrane to the nascent glucan backbones on the periplasmic side of the membrane. The chain is Glucans biosynthesis protein C from Salmonella choleraesuis (strain SC-B67).